The following is a 28-amino-acid chain: Dermaseptin-H2 (28 aa).

The protein belongs to the frog skin active peptide (FSAP) family. Dermaseptin subfamily. In terms of tissue distribution, expressed by the skin glands.

Its subcellular location is the secreted. Functionally, possesses a potent antimicrobial activity against Gram-positive and Gram-negative bacteria. Probably acts by disturbing membrane functions with its amphipathic structure. This chain is Dermaseptin-H2, found in Pithecopus azureus (Orange-legged monkey tree frog).